We begin with the raw amino-acid sequence, 299 residues long: N-acetylneuraminate lyase (299 aa).

Ser45 and Ser46 together coordinate aceneuramate. The active-site Proton donor is the Tyr134. The active-site Schiff-base intermediate with substrate is the Lys161. 4 residues coordinate aceneuramate: Thr163, Gly185, Asp187, and Glu188.

This sequence belongs to the DapA family. NanA subfamily. In terms of assembly, homotetramer.

It is found in the cytoplasm. It carries out the reaction aceneuramate = aldehydo-N-acetyl-D-mannosamine + pyruvate. The protein operates within amino-sugar metabolism; N-acetylneuraminate degradation; D-fructose 6-phosphate from N-acetylneuraminate: step 1/5. Functionally, catalyzes the reversible aldol cleavage of N-acetylneuraminic acid (sialic acid; Neu5Ac) to form pyruvate and N-acetylmannosamine (ManNAc) via a Schiff base intermediate. In Rhizobium meliloti (strain 1021) (Ensifer meliloti), this protein is N-acetylneuraminate lyase.